The chain runs to 326 residues: N-acetyl-gamma-glutamyl-phosphate reductase (326 aa).

Residue C155 is part of the active site.

Belongs to the NAGSA dehydrogenase family. Type 1 subfamily.

It localises to the cytoplasm. The catalysed reaction is N-acetyl-L-glutamate 5-semialdehyde + phosphate + NADP(+) = N-acetyl-L-glutamyl 5-phosphate + NADPH + H(+). The protein operates within amino-acid biosynthesis; L-arginine biosynthesis; N(2)-acetyl-L-ornithine from L-glutamate: step 3/4. In terms of biological role, catalyzes the NADPH-dependent reduction of N-acetyl-5-glutamyl phosphate to yield N-acetyl-L-glutamate 5-semialdehyde. In Shewanella oneidensis (strain ATCC 700550 / JCM 31522 / CIP 106686 / LMG 19005 / NCIMB 14063 / MR-1), this protein is N-acetyl-gamma-glutamyl-phosphate reductase.